A 160-amino-acid chain; its full sequence is Small ribosomal subunit protein bS6 (160 aa).

This sequence belongs to the bacterial ribosomal protein bS6 family.

Functionally, binds together with bS18 to 16S ribosomal RNA. In Ureaplasma parvum serovar 3 (strain ATCC 27815 / 27 / NCTC 11736), this protein is Small ribosomal subunit protein bS6.